A 223-amino-acid chain; its full sequence is Octanoyltransferase (223 aa).

The 186-residue stretch at Gly31 to Pro216 folds into the BPL/LPL catalytic domain. Residues Arg76 to His83, Ala145 to Gly147, and Gly159 to Ala161 each bind substrate. Cys177 (acyl-thioester intermediate) is an active-site residue.

This sequence belongs to the LipB family.

It localises to the cytoplasm. The catalysed reaction is octanoyl-[ACP] + L-lysyl-[protein] = N(6)-octanoyl-L-lysyl-[protein] + holo-[ACP] + H(+). It functions in the pathway protein modification; protein lipoylation via endogenous pathway; protein N(6)-(lipoyl)lysine from octanoyl-[acyl-carrier-protein]: step 1/2. Catalyzes the transfer of endogenously produced octanoic acid from octanoyl-acyl-carrier-protein onto the lipoyl domains of lipoate-dependent enzymes. Lipoyl-ACP can also act as a substrate although octanoyl-ACP is likely to be the physiological substrate. This is Octanoyltransferase from Chloroflexus aurantiacus (strain ATCC 29366 / DSM 635 / J-10-fl).